The sequence spans 228 residues: Mediator of RNA polymerase II transcription subunit 7-A (228 aa).

The protein belongs to the Mediator complex subunit 7 family. In terms of assembly, component of the Mediator complex.

The protein resides in the nucleus. Component of the Mediator complex, a coactivator involved in the regulated transcription of nearly all RNA polymerase II-dependent genes. Mediator functions as a bridge to convey information from gene-specific regulatory proteins to the basal RNA polymerase II transcription machinery. Mediator is recruited to promoters by direct interactions with regulatory proteins and serves as a scaffold for the assembly of a functional preinitiation complex with RNA polymerase II and the general transcription factors. The chain is Mediator of RNA polymerase II transcription subunit 7-A (med7-a) from Xenopus laevis (African clawed frog).